We begin with the raw amino-acid sequence, 370 residues long: Chaperone protein DnaJ (370 aa).

A J domain is found at 6 to 70; sequence DYYEVLGVQR…EKRSMYDRFG (65 aa). The CR-type zinc-finger motif lies at 128-208; it reads GVEKTIEYRR…CRGEGRIRQT (81 aa). Zn(2+)-binding residues include cysteine 141, cysteine 144, cysteine 158, cysteine 161, cysteine 182, cysteine 185, cysteine 196, and cysteine 199. CXXCXGXG motif repeat units lie at residues 141–148, 158–165, 182–189, and 196–203; these read CPACRGSG, CPKCGGLG, CDMCRGEG, and CRECRGEG.

It belongs to the DnaJ family. Homodimer. It depends on Zn(2+) as a cofactor.

The protein resides in the cytoplasm. Its function is as follows. Participates actively in the response to hyperosmotic and heat shock by preventing the aggregation of stress-denatured proteins and by disaggregating proteins, also in an autonomous, DnaK-independent fashion. Unfolded proteins bind initially to DnaJ; upon interaction with the DnaJ-bound protein, DnaK hydrolyzes its bound ATP, resulting in the formation of a stable complex. GrpE releases ADP from DnaK; ATP binding to DnaK triggers the release of the substrate protein, thus completing the reaction cycle. Several rounds of ATP-dependent interactions between DnaJ, DnaK and GrpE are required for fully efficient folding. Also involved, together with DnaK and GrpE, in the DNA replication of plasmids through activation of initiation proteins. This is Chaperone protein DnaJ from Roseiflexus castenholzii (strain DSM 13941 / HLO8).